A 699-amino-acid chain; its full sequence is SPS-sensor serine protease component SSY5 (699 aa).

Disordered regions lie at residues 1–113 (MVRF…LQGF) and 128–158 (PVKE…ENAR). Residues 1–381 (MVRFFGLNKK…YCVKDYIKKA (381 aa)) constitute a propeptide that is removed on maturation. Positions 24–38 (NEQNAAETSSSNVSG) are enriched in polar residues. Residues 39-51 (NEERIDPNSHDTN) show a composition bias toward basic and acidic residues. Positions 61–78 (STTFGSSIQSSSIFSRGR) are enriched in low complexity. Residues 83 to 93 (TGASSSMATSE) are compositionally biased toward polar residues. Composition is skewed to low complexity over residues 97–109 (HSSG…NSKN) and 144–154 (SSSTSSTLATS). Positions 459–699 (FAITCAHVVL…QWDIDPQLDG (241 aa)) are serine protease. Catalysis depends on charge relay system residues histidine 465, aspartate 545, and serine 640.

The protein belongs to the peptidase S64 family. In terms of assembly, component of the plasma membrane SPS (SSY1-PTR3-SSY5) amino acid sensor complex. Post-translationally, the propeptide is autoproteolytically cleaved from the catalytic domain but remains associated, forming an inactive protease complex. This processing occurs even in the absence of signaling.

It is found in the cell membrane. Its function is as follows. Protease component of the SPS-sensor system, which regulates the expression of several amino acid-metabolizing enzymes and amino acid- and peptide-permeases in response to extracellular amino acid levels by controlling the activity of two transcription factors, STP1 and STP2. Catalyzes the activation of these transcription factors, which are synthesized as latent cytoplasmic precursors, by proteolytic removal of an N-terminal inhibitory domain containing cytoplasmic retention motifs. SSY5 binds as an inactive protease complex to STP1. In response to extracellular amino acids and dependent on the other SPS-sensor components, the inhibitory propeptide is induced to dissociate, and thereby enables the catalytic domain to process STP1. This Saccharomyces cerevisiae (strain ATCC 204508 / S288c) (Baker's yeast) protein is SPS-sensor serine protease component SSY5 (SSY5).